A 133-amino-acid chain; its full sequence is MVVSFVSICGLLLIFNLPLSTSFPVLSDTDVDVLEAILHKLEESMSEETEEDQMVPANSESLEPVGSMKQTANRDQIRPVEVEAIREFLSANTRKNVQNDSSRRSSSCFGRRMDRIGSMSSLGCNTVGKYNPK.

The N-terminal stretch at 1–22 (MVVSFVSICGLLLIFNLPLSTS) is a signal peptide. Residues 44 to 53 (SMSEETEEDQ) are compositionally biased toward acidic residues. 2 disordered regions span residues 44–76 (SMSE…NRDQ) and 93–112 (TRKN…FGRR). A disulfide bridge connects residues cysteine 108 and cysteine 124.

The protein belongs to the natriuretic peptide family.

Its subcellular location is the secreted. Cardiac hormone which may function as a paracrine antifibrotic factor in the heart. Also plays a key role in cardiovascular homeostasis through natriuresis, diuresis, vasorelaxation, and inhibition of renin and aldosterone secretion. Has a cGMP-stimulating activity. The polypeptide is Brain natriuretic peptide (nppb) (Takifugu rubripes (Japanese pufferfish)).